The chain runs to 491 residues: NADH-quinone oxidoreductase subunit N (491 aa).

The next 14 membrane-spanning stretches (helical) occupy residues 11–31, 38–58, 74–94, 106–126, 128–148, 163–183, 206–226, 243–263, 272–292, 301–321, 336–356, 379–399, 410–430, and 465–485; these read ATAE…TTFA, LAYG…YNTA, LLGD…LLYG, PEYY…VTSN, LLSM…LVAF, FVLG…LYGA, LLFG…VVPF, LIIA…LLVW, WQTM…LAAI, LAYS…SGVV, MFYA…IILL, FAAM…FIGF, VAAG…IGAF, and LAIA…TFVL.

This sequence belongs to the complex I subunit 2 family. As to quaternary structure, NDH-1 is composed of 14 different subunits. Subunits NuoA, H, J, K, L, M, N constitute the membrane sector of the complex.

The protein resides in the cell inner membrane. The catalysed reaction is a quinone + NADH + 5 H(+)(in) = a quinol + NAD(+) + 4 H(+)(out). Functionally, NDH-1 shuttles electrons from NADH, via FMN and iron-sulfur (Fe-S) centers, to quinones in the respiratory chain. The immediate electron acceptor for the enzyme in this species is believed to be ubiquinone. Couples the redox reaction to proton translocation (for every two electrons transferred, four hydrogen ions are translocated across the cytoplasmic membrane), and thus conserves the redox energy in a proton gradient. The chain is NADH-quinone oxidoreductase subunit N from Azoarcus sp. (strain BH72).